The sequence spans 296 residues: MEYKFFLSESQMVLKAFYIESAMIAMLTGAKGNIVINGQSIEIESDVTLIIPKYSQVSCNIVCNTVKQPLELHTLSMSAEELQAVFLLLKTLMKSGAPLTSHQPIYHISPPETVRDNFSLLKQCLPLKKQSASQEALLMKQSLYFILMAIYQEGIDILNLFRFNYDEPKNQAITHLITQEPQKKWHLDDVAKALFTTPSTLRRHLNREGVSFRQLLLDVRMGMALNYLTFSNYSVFQISHRCGFGSNAYFCDVFKRKYNMTPSQFRLQSRQSNDPNFITNLSLRSNPIEFDKEIDE.

The HTH araC/xylS-type domain occupies 171 to 268 (QAITHLITQE…NMTPSQFRLQ (98 aa)). DNA-binding regions (H-T-H motif) lie at residues 188–209 (DDVAKALFTTPSTLRRHLNREG) and 235–258 (VFQISHRCGFGSNAYFCDVFKRKY).

In terms of biological role, positive regulator of the expression of the urease operon. This Escherichia coli protein is Urease operon transcriptional activator (ureR).